We begin with the raw amino-acid sequence, 263 residues long: Rhomboid-like protease 3 (263 aa).

Helical transmembrane passes span 37–57, 86–106, 121–141, 142–162, 189–209, and 231–251; these read KSIV…CVLS, VVTP…LVFI, KFLV…MLMQ, PWAL…GMAA, LIYF…GGFL, and VLFY…PPLL. The active-site Nucleophile is Ser150. Residue His204 is part of the active site.

The protein belongs to the peptidase S54 family.

The protein localises to the membrane. The catalysed reaction is Cleaves type-1 transmembrane domains using a catalytic dyad composed of serine and histidine that are contributed by different transmembrane domains.. Its function is as follows. Serine protease involved in intramembrane proteolysis and the subsequent release of polypeptides from their membrane anchors. This chain is Rhomboid-like protease 3 (ROM3), found in Toxoplasma gondii.